A 446-amino-acid chain; its full sequence is Minor teichoic acid biosynthesis protein GgaA (446 aa).

Belongs to the glycosyltransferase 2 family.

It participates in cell wall biogenesis; poly(glucopyranosyl N-acetylgalactosamine 1-phosphate) teichoic acid biosynthesis. Involved in the biosynthesis of galactosamine-containing minor teichoic acid, a non-essential cell wall polymer in B.subtilis 168. The sequence is that of Minor teichoic acid biosynthesis protein GgaA (ggaA) from Bacillus subtilis (strain 168).